A 332-amino-acid chain; its full sequence is Cell division protein ZipA (332 aa).

Topologically, residues 1–6 are periplasmic; sequence MMQDLR. The helical transmembrane segment at 7-27 threads the bilayer; sequence LILIVVGAIAIIALLLHGLWT. At 28 to 332 the chain is on the cytoplasmic side; the sequence is SRKERSSLFR…RIRDVLKANA (305 aa). Residues 40–51 are compositionally biased toward basic and acidic residues; sequence PVKRAKKARDET. A disordered region spans residues 40-189; it reads PVKRAKKARD…VQPAPQQPAE (150 aa). A compositionally biased stretch (low complexity) spans 76–88; that stretch reads SFDSASVDSSSFD. The segment covering 93–105 has biased composition (basic and acidic residues); sequence AREDVRSEAKSPF.

The protein belongs to the ZipA family. As to quaternary structure, interacts with FtsZ via their C-terminal domains.

Its subcellular location is the cell inner membrane. Essential cell division protein that stabilizes the FtsZ protofilaments by cross-linking them and that serves as a cytoplasmic membrane anchor for the Z ring. Also required for the recruitment to the septal ring of downstream cell division proteins. This is Cell division protein ZipA from Pectobacterium atrosepticum (strain SCRI 1043 / ATCC BAA-672) (Erwinia carotovora subsp. atroseptica).